The following is a 766-amino-acid chain: Serine/threonine-protein kinase PKH1 (766 aa).

The interval 1–52 (MGNRSLTEADHALLSKPLVPTSAEHTQTQEYPRPFVDGSNSQSGSELQASPQ) is disordered. Positions 38 to 52 (GSNSQSGSELQASPQ) are enriched in polar residues. The 267-residue stretch at 125 to 391 (FKFGEQLGDG…IKQIKAHLFF (267 aa)) folds into the Protein kinase domain. ATP is bound by residues 135–137 (SYS) and K154. A PIF-pocket region spans residues 156 to 201 (LSKEYLIRQKKVKYVTVEKLALQKLNGTKGIFKLFFTFQDEASLYF). ATP contacts are provided by residues 204–206 (EYA) and D210. D249 serves as the catalytic Proton acceptor. Positions 253 and 267 each coordinate ATP. Phosphoserine is present on residues S294 and S296. Residues 476–495 (TSQPKLGSKSSTSVRSASNN) show a composition bias toward polar residues. Disordered stretches follow at residues 476 to 529 (TSQP…NRSR) and 725 to 745 (PEEGALHTKRPTSLQTRSSSN). The span at 511–521 (SVSSPSISTTS) shows a compositional bias: low complexity. Polar residues predominate over residues 735–745 (PTSLQTRSSSN).

It belongs to the protein kinase superfamily. AGC Ser/Thr protein kinase family. PDPK1 subfamily.

It catalyses the reaction L-seryl-[protein] + ATP = O-phospho-L-seryl-[protein] + ADP + H(+). The catalysed reaction is L-threonyl-[protein] + ATP = O-phospho-L-threonyl-[protein] + ADP + H(+). In terms of biological role, activates YPK1 by phosphorylating of a threonine residue. The protein is Serine/threonine-protein kinase PKH1 (PKH1) of Saccharomyces cerevisiae (strain ATCC 204508 / S288c) (Baker's yeast).